The sequence spans 690 residues: Choline transporter-like 1 (690 aa).

A helical transmembrane segment spans residues 23–43; the sequence is IFWLVLYVVFWIALIVIAVFS. Asn-134 carries N-linked (GlcNAc...) asparagine glycosylation. Helical transmembrane passes span 203–223, 237–259, 282–302, and 334–354; these read LYKA…FSIV, WLIC…WSYY, ATIY…LVVI, and LLAF…VVCL. N-linked (GlcNAc...) asparagine glycosylation occurs at Asn-391. Helical transmembrane passes span 415–435, 464–484, 565–585, and 594–614; these read IYII…QLAI, LGSV…RLIL, FVLF…SILL, and FYMA…HIIL.

This sequence belongs to the CTL (choline transporter-like) family.

Its subcellular location is the membrane. The polypeptide is Choline transporter-like 1 (Anopheles gambiae (African malaria mosquito)).